Reading from the N-terminus, the 203-residue chain is Urease accessory protein UreG (203 aa).

GTP is bound at residue 14–21 (GPVGSGKT).

It belongs to the SIMIBI class G3E GTPase family. UreG subfamily. Homodimer. UreD, UreF and UreG form a complex that acts as a GTP-hydrolysis-dependent molecular chaperone, activating the urease apoprotein by helping to assemble the nickel containing metallocenter of UreC. The UreE protein probably delivers the nickel.

It is found in the cytoplasm. Its function is as follows. Facilitates the functional incorporation of the urease nickel metallocenter. This process requires GTP hydrolysis, probably effectuated by UreG. The polypeptide is Urease accessory protein UreG (Rhizobium leguminosarum bv. viciae).